The chain runs to 192 residues: Protein GrpE (192 aa).

The tract at residues 1–43 is disordered; it reads MQENKQPSEIQGELPQPPDGESVPPQPTNEQAPPDTDTMPRIE.

This sequence belongs to the GrpE family. Homodimer.

The protein resides in the cytoplasm. In terms of biological role, participates actively in the response to hyperosmotic and heat shock by preventing the aggregation of stress-denatured proteins, in association with DnaK and GrpE. It is the nucleotide exchange factor for DnaK and may function as a thermosensor. Unfolded proteins bind initially to DnaJ; upon interaction with the DnaJ-bound protein, DnaK hydrolyzes its bound ATP, resulting in the formation of a stable complex. GrpE releases ADP from DnaK; ATP binding to DnaK triggers the release of the substrate protein, thus completing the reaction cycle. Several rounds of ATP-dependent interactions between DnaJ, DnaK and GrpE are required for fully efficient folding. The polypeptide is Protein GrpE (Aromatoleum aromaticum (strain DSM 19018 / LMG 30748 / EbN1) (Azoarcus sp. (strain EbN1))).